The following is a 297-amino-acid chain: Pyridoxal 5'-phosphate synthase subunit Pdx1 (297 aa).

Aspartate 27 is a D-ribose 5-phosphate binding site. Catalysis depends on lysine 84, which acts as the Schiff-base intermediate with D-ribose 5-phosphate. A D-ribose 5-phosphate-binding site is contributed by glycine 156. D-glyceraldehyde 3-phosphate is bound at residue arginine 168. D-ribose 5-phosphate contacts are provided by residues glycine 217 and 238–239; that span reads GS.

This sequence belongs to the PdxS/SNZ family. Homohexamer and homododecamer. In the presence of Pdx2, forms a dodecamer of heterodimers.

It catalyses the reaction aldehydo-D-ribose 5-phosphate + D-glyceraldehyde 3-phosphate + L-glutamine = pyridoxal 5'-phosphate + L-glutamate + phosphate + 3 H2O + H(+). It functions in the pathway cofactor biosynthesis; pyridoxal 5'-phosphate biosynthesis. Its function is as follows. Catalyzes the formation of pyridoxal 5'-phosphate from ribose 5-phosphate (RBP), glyceraldehyde 3-phosphate (G3P) and ammonia. The ammonia is provided by Pdx2. Can also use ribulose 5-phosphate and dihydroxyacetone phosphate as substrates, resulting from enzyme-catalyzed isomerization of RBP and G3P, respectively. The sequence is that of Pyridoxal 5'-phosphate synthase subunit Pdx1 from Plasmodium berghei.